The sequence spans 415 residues: Histidine--tRNA ligase (415 aa).

The protein belongs to the class-II aminoacyl-tRNA synthetase family. Homodimer.

The protein resides in the cytoplasm. The enzyme catalyses tRNA(His) + L-histidine + ATP = L-histidyl-tRNA(His) + AMP + diphosphate + H(+). The sequence is that of Histidine--tRNA ligase from Clostridium botulinum (strain ATCC 19397 / Type A).